Consider the following 228-residue polypeptide: Putative elongation factor Tu-like protein (228 aa).

Residues 6 to 212 enclose the tr-type G domain; it reads KPHINVGTIG…LPIREKDNPF (207 aa). The interval 15-22 is G1; that stretch reads GHVDHGKT. A G2 region spans residues 59–63; the sequence is GITIS. Residues 80–83 are G3; the sequence is DCPG. The G4 stretch occupies residues 135 to 138; sequence NKCD. The G5 stretch occupies residues 173–175; sequence SAV.

This sequence belongs to the TRAFAC class translation factor GTPase superfamily. Classic translation factor GTPase family. EF-Tu/EF-1A subfamily.

The polypeptide is Putative elongation factor Tu-like protein (Ehrlichia ruminantium (strain Welgevonden)).